Here is a 463-residue protein sequence, read N- to C-terminus: Chromosomal replication initiator protein DnaA (463 aa).

The segment at 1–83 (MSTNQIILTD…LQLFQHYNNT (83 aa)) is domain I, interacts with DnaA modulators. Residues 83–124 (TIKSIEIITKELPGTTQTVTELPTKTFADIGSSELNSENIFS) are domain II. The segment at 125 to 343 (TLDARFTFDN…GALNKVIAHS (219 aa)) is domain III, AAA+ region. Residues Gly171, Gly173, Lys174, and Thr175 each coordinate ATP. The domain IV, binds dsDNA stretch occupies residues 344-463 (NFTLKEITLE…INLLMKILQN (120 aa)).

Belongs to the DnaA family. As to quaternary structure, oligomerizes as a right-handed, spiral filament on DNA at oriC.

Its subcellular location is the cytoplasm. In terms of biological role, plays an essential role in the initiation and regulation of chromosomal replication. ATP-DnaA binds to the origin of replication (oriC) to initiate formation of the DNA replication initiation complex once per cell cycle. Binds the DnaA box (a 9 base pair repeat at the origin) and separates the double-stranded (ds)DNA. Forms a right-handed helical filament on oriC DNA; dsDNA binds to the exterior of the filament while single-stranded (ss)DNA is stabiized in the filament's interior. The ATP-DnaA-oriC complex binds and stabilizes one strand of the AT-rich DNA unwinding element (DUE), permitting loading of DNA polymerase. After initiation quickly degrades to an ADP-DnaA complex that is not apt for DNA replication. Binds acidic phospholipids. This chain is Chromosomal replication initiator protein DnaA, found in Rickettsia peacockii (strain Rustic).